Consider the following 290-residue polypeptide: Tubulin polyglutamylase complex subunit 1 (290 aa).

Residues 1–30 form a disordered region; that stretch reads MAAVEKRRQAVPPPAGFTDSGRQSVSRAAG. Residues serine 34 and serine 266 each carry the phosphoserine modification.

In terms of assembly, part of the neuronal tubulin polyglutamylase complex which contains TPGS1, TPGS2, TTLL1, LRRC49 and NICN1. Interacts with PCM1, CSTPP1 and LRRC49.

It localises to the cytoplasm. It is found in the cytoskeleton. The protein resides in the cilium axoneme. The protein localises to the flagellum axoneme. Its subcellular location is the cilium basal body. It localises to the flagellum basal body. It is found in the cell projection. The protein resides in the axon. The protein localises to the dendrite. Its subcellular location is the microtubule organizing center. It localises to the centrosome. It is found in the centriolar satellite. Functionally, subunit of the tubulin polyglutamylase complex (TPGC). The complex mediates cilia and flagella polyglutamylation which is essential for their biogenesis and motility. May act in the targeting of the tubulin polyglutamylase complex. Required for the development of the spermatid flagellum. This chain is Tubulin polyglutamylase complex subunit 1, found in Homo sapiens (Human).